Here is a 337-residue protein sequence, read N- to C-terminus: Quinolinate synthase (337 aa).

Iminosuccinate contacts are provided by His38 and Ser59. Cys104 contacts [4Fe-4S] cluster. Iminosuccinate contacts are provided by residues 130 to 132 and Ser147; that span reads YAN. Cys191 serves as a coordination point for [4Fe-4S] cluster. Iminosuccinate is bound by residues 217–219 and Thr234; that span reads HPE. Cys288 is a binding site for [4Fe-4S] cluster.

This sequence belongs to the quinolinate synthase family. Type 1 subfamily. The cofactor is [4Fe-4S] cluster.

The protein localises to the cytoplasm. It carries out the reaction iminosuccinate + dihydroxyacetone phosphate = quinolinate + phosphate + 2 H2O + H(+). Its pathway is cofactor biosynthesis; NAD(+) biosynthesis; quinolinate from iminoaspartate: step 1/1. In terms of biological role, catalyzes the condensation of iminoaspartate with dihydroxyacetone phosphate to form quinolinate. This is Quinolinate synthase from Wigglesworthia glossinidia brevipalpis.